Consider the following 255-residue polypeptide: 2,3-dehydroadipyl-CoA hydratase (255 aa).

It belongs to the enoyl-CoA hydratase/isomerase family.

The enzyme catalyses a (3S)-3-hydroxyacyl-CoA = a (2E)-enoyl-CoA + H2O. The catalysed reaction is a 4-saturated-(3S)-3-hydroxyacyl-CoA = a (3E)-enoyl-CoA + H2O. It functions in the pathway aromatic compound metabolism; phenylacetate degradation. In terms of biological role, catalyzes the reversible conversion of enzymatically produced 2,3-dehydroadipyl-CoA into 3-hydroxyadipyl-CoA. The chain is 2,3-dehydroadipyl-CoA hydratase (paaF) from Escherichia coli (strain K12).